Here is a 76-residue protein sequence, read N- to C-terminus: Sec-independent protein translocase protein TatA (76 aa).

Residues 1-21 form a helical membrane-spanning segment; it reads MGGISIWQLLIIVAIIVLLFG. Residues 43–76 are disordered; that stretch reads MADDKSQPQDASFEKVEAKEAASTEQKAKEKEQA.

This sequence belongs to the TatA/E family. In terms of assembly, the Tat system comprises two distinct complexes: a TatABC complex, containing multiple copies of TatA, TatB and TatC subunits, and a separate TatA complex, containing only TatA subunits. Substrates initially bind to the TatABC complex, which probably triggers association of the separate TatA complex to form the active translocon.

The protein resides in the cell inner membrane. Its function is as follows. Part of the twin-arginine translocation (Tat) system that transports large folded proteins containing a characteristic twin-arginine motif in their signal peptide across membranes. TatA could form the protein-conducting channel of the Tat system. The polypeptide is Sec-independent protein translocase protein TatA (Actinobacillus pleuropneumoniae serotype 5b (strain L20)).